The primary structure comprises 798 residues: Phenylalanine--tRNA ligase beta subunit (798 aa).

The region spanning 39 to 148 is the tRNA-binding domain; sequence GKDLDNVVIG…EDAPIGTEYR (110 aa). The B5 domain maps to 401 to 477; sequence PQRAEISLNL…RMYGFDNIEA (77 aa). Mg(2+)-binding residues include Asp455, Asp461, Glu464, and Glu465. The 93-residue stretch at 705–797 folds into the FDX-ACB domain; that stretch reads SKYPEVLRDL…IKDKYNGEIR (93 aa).

The protein belongs to the phenylalanyl-tRNA synthetase beta subunit family. Type 1 subfamily. In terms of assembly, tetramer of two alpha and two beta subunits. Requires Mg(2+) as cofactor.

Its subcellular location is the cytoplasm. It carries out the reaction tRNA(Phe) + L-phenylalanine + ATP = L-phenylalanyl-tRNA(Phe) + AMP + diphosphate + H(+). This is Phenylalanine--tRNA ligase beta subunit from Fusobacterium nucleatum subsp. nucleatum (strain ATCC 25586 / DSM 15643 / BCRC 10681 / CIP 101130 / JCM 8532 / KCTC 2640 / LMG 13131 / VPI 4355).